We begin with the raw amino-acid sequence, 365 residues long: Paraneoplastic antigen Ma2 homolog (365 aa).

Ala-2 is subject to N-acetylalanine. The disordered stretch occupies residues Glu-336–Asn-365. Basic and acidic residues predominate over residues Gln-344–Gly-355.

Belongs to the PNMA family. Expressed in the cerebrum, cerebellum and testis.

It localises to the nucleus. Its subcellular location is the nucleolus. The polypeptide is Paraneoplastic antigen Ma2 homolog (Pnma2) (Mus musculus (Mouse)).